Consider the following 817-residue polypeptide: Cargo-transport protein YPP1 (817 aa).

This sequence belongs to the YPP1 family. As to quaternary structure, interacts with ribosomes.

Its subcellular location is the cytoplasmic granule. The protein localises to the cell membrane. Involved in endocytosis. In Saccharomyces cerevisiae (strain ATCC 204508 / S288c) (Baker's yeast), this protein is Cargo-transport protein YPP1 (YPP1).